Here is an 878-residue protein sequence, read N- to C-terminus: MAQSSPKASSRHTPMMRQFLRIKAEHPDILLFYRMGDFYELFYEDAERAAKLLDITLTTRGQSAGEPIPMAGVPVHAVESYLARLVRQGESVAICEQIGDPDNSKGPVERQVVRIVTPGTLTDEALLEERQSNILAALSCHQSRWGLASLELSSGRFSLTEPADEQALAADLERLNPAELLVDEALTLPTGLAVGPGLTRRPPWHFELDTATDLLTEQFGTRDLAGFGAQDHSAGLAAAGALLQYVRETQRSALPHIRRLQVEHGDQAIVIDAASRRNLELERNLSGGTEHTLASVLDSTVNAMGSRLLRRWLNRPLRDRTTLQARHQAVEILMAESLTEALRRQLRGISDVERILARVALGSARPRDLTGLRETLARLPDIQATLTGAGAPRLVDLAAQCGEHPQTLDHLRRALVDQPPVVIRDGGVIAEGYDATLDELRTLSENADNYLLELEQRERERTGISTLKVGYNRVHGYYIEVTRAQADAVPAEYVRRQTLKGVERYILPELKAFEDKVLSAREKALAREKVLYEQLLASLASDLAPLQDTAAALAELDTLAAFAERAQALDYSRPELRDGAGLRIEAGRHPVVEYSLDGPFVPNDLTLDDRRRMLIITGPNMGGKSTYMRQVALITLMAHIGSFVPARAASLGPVDRIFTRIGASDDLAGGRSTFMVEMTETANILHNATAQSLVLMDEIGRGTSTFDGLALAWATAERLARDQRAYTLFATHYFEMTALPEQCPGASNVHLDAVEHGERIVFLHAVKPGPASQSYGLQVAALAGVPGPVLEAAREKLRALEEESSRQRAEPDQLSLFAEPAPPPPLPSAAEQALSEVDPDELSPRQALDLLYRLKALTSGEEGADKKARGDAVDARSR.

Residue 618-625 (GPNMGGKS) participates in ATP binding. Composition is skewed to basic and acidic residues over residues 800-811 (LEEESSRQRAEP) and 863-878 (GADK…ARSR). Disordered stretches follow at residues 800–842 (LEEE…PDEL) and 859–878 (SGEE…ARSR).

Belongs to the DNA mismatch repair MutS family.

In terms of biological role, this protein is involved in the repair of mismatches in DNA. It is possible that it carries out the mismatch recognition step. This protein has a weak ATPase activity. The chain is DNA mismatch repair protein MutS from Alkalilimnicola ehrlichii (strain ATCC BAA-1101 / DSM 17681 / MLHE-1).